The following is a 446-amino-acid chain: Nuclear envelope integral membrane protein 1 (446 aa).

Residues methionine 1–glycine 37 form the signal peptide. 3 N-linked (GlcNAc...) asparagine glycosylation sites follow: asparagine 62, asparagine 118, and asparagine 129. The next 5 helical transmembrane spans lie at isoleucine 154–serine 174, tyrosine 181–tyrosine 201, proline 209–phenylalanine 229, histidine 239–tyrosine 259, and serine 269–isoleucine 289. The span at leucine 410–isoleucine 431 shows a compositional bias: acidic residues. Positions leucine 410–lysine 446 are disordered. N-linked (GlcNAc...) asparagine glycosylation is present at asparagine 441.

This sequence belongs to the NEMP family.

Its subcellular location is the nucleus inner membrane. Its function is as follows. Contributes to nuclear envelope stiffness in germ cells. Involved in male and female fertility. Essential for normal erythropoiesis. Required for efficient nuclear envelope opening and enucleation during the late stages of erythroblast maturation. In Danio rerio (Zebrafish), this protein is Nuclear envelope integral membrane protein 1.